Consider the following 795-residue polypeptide: Histidine biosynthesis trifunctional protein (795 aa).

Residues 1–225 (MLPVVPVFNA…VVRQGGSGSF (225 aa)) form a phosphoribosyl-AMP cyclohydrolase region. Residues 226–308 (CHLETESCFG…FYFAMARLVA (83 aa)) are phosphoribosyl-ATP pyrophosphohydrolase. The histidinol dehydrogenase stretch occupies residues 309-795 (NGVSLEDVER…KLGLLPSGFE (487 aa)). Gln614 and His617 together coordinate Zn(2+). Active-site residues include Glu683 and His684. The Zn(2+) site is built by Asp717 and His776.

The protein in the C-terminal section; belongs to the histidinol dehydrogenase family. Requires Zn(2+) as cofactor.

The enzyme catalyses 1-(5-phospho-beta-D-ribosyl)-5'-AMP + H2O = 1-(5-phospho-beta-D-ribosyl)-5-[(5-phospho-beta-D-ribosylamino)methylideneamino]imidazole-4-carboxamide. It catalyses the reaction 1-(5-phospho-beta-D-ribosyl)-ATP + H2O = 1-(5-phospho-beta-D-ribosyl)-5'-AMP + diphosphate + H(+). It carries out the reaction L-histidinol + 2 NAD(+) + H2O = L-histidine + 2 NADH + 3 H(+). It participates in amino-acid biosynthesis; L-histidine biosynthesis; L-histidine from 5-phospho-alpha-D-ribose 1-diphosphate: step 2/9. Its pathway is amino-acid biosynthesis; L-histidine biosynthesis; L-histidine from 5-phospho-alpha-D-ribose 1-diphosphate: step 3/9. The protein operates within amino-acid biosynthesis; L-histidine biosynthesis; L-histidine from 5-phospho-alpha-D-ribose 1-diphosphate: step 9/9. This Kluyveromyces lactis (strain ATCC 8585 / CBS 2359 / DSM 70799 / NBRC 1267 / NRRL Y-1140 / WM37) (Yeast) protein is Histidine biosynthesis trifunctional protein (HIS4).